The chain runs to 108 residues: Large ribosomal subunit protein uL23 (108 aa).

Belongs to the universal ribosomal protein uL23 family. In terms of assembly, part of the 50S ribosomal subunit. Contacts protein L29, and trigger factor when it is bound to the ribosome.

Its function is as follows. One of the early assembly proteins it binds 23S rRNA. One of the proteins that surrounds the polypeptide exit tunnel on the outside of the ribosome. Forms the main docking site for trigger factor binding to the ribosome. The polypeptide is Large ribosomal subunit protein uL23 (Albidiferax ferrireducens (strain ATCC BAA-621 / DSM 15236 / T118) (Rhodoferax ferrireducens)).